A 192-amino-acid chain; its full sequence is Ion-translocating oxidoreductase complex subunit B (192 aa).

The segment at 1-26 (MNAFWIAVAAVSLLGLAFGAILGYAS) is hydrophobic. The 60-residue stretch at 32 to 91 (EDDPVVEKIDEILPQSQCGQCGYPGCRPYAEAISCNGEKINRCAPGGEAVMLKIAELLNV) folds into the 4Fe-4S domain. Residues C49, C52, C57, C74, C117, C120, C123, C127, C147, C150, C153, and C157 each coordinate [4Fe-4S] cluster. 4Fe-4S ferredoxin-type domains lie at 108 to 137 (MVAVIDENNCIGCTKCIQACPVDAIVGATR) and 138 to 167 (AMHTVMSDLCTGCNLCVDPCPTHCISLQPV).

This sequence belongs to the 4Fe4S bacterial-type ferredoxin family. RnfB subfamily. In terms of assembly, the complex is composed of six subunits: RsxA, RsxB, RsxC, RsxD, RsxE and RsxG. [4Fe-4S] cluster is required as a cofactor.

The protein resides in the cell inner membrane. Its function is as follows. Part of a membrane-bound complex that couples electron transfer with translocation of ions across the membrane. Required to maintain the reduced state of SoxR. The chain is Ion-translocating oxidoreductase complex subunit B from Escherichia coli O6:H1 (strain CFT073 / ATCC 700928 / UPEC).